Consider the following 607-residue polypeptide: DNA polymerase (607 aa).

The 213-residue stretch at Met1–Asp213 folds into the 3'-5' exonuclease domain. The interval Val214–Tyr607 is polymerase.

It belongs to the DNA polymerase type-A family.

The enzyme catalyses DNA(n) + a 2'-deoxyribonucleoside 5'-triphosphate = DNA(n+1) + diphosphate. In terms of biological role, replicates viral genomic DNA. This polymerase possesses two enzymatic activities: DNA synthesis (polymerase) and an exonucleolytic activity that degrades single-stranded DNA in the 3'-5' direction. The sequence is that of DNA polymerase (44) from Mycobacterium phage D29 (Mycobacteriophage D29).